The sequence spans 274 residues: Hydroxyethylthiazole kinase (274 aa).

Met-50 provides a ligand contact to substrate. 2 residues coordinate ATP: Arg-126 and Ser-171. Ala-200 is a substrate binding site.

Belongs to the Thz kinase family. Mg(2+) is required as a cofactor.

The enzyme catalyses 5-(2-hydroxyethyl)-4-methylthiazole + ATP = 4-methyl-5-(2-phosphooxyethyl)-thiazole + ADP + H(+). It functions in the pathway cofactor biosynthesis; thiamine diphosphate biosynthesis; 4-methyl-5-(2-phosphoethyl)-thiazole from 5-(2-hydroxyethyl)-4-methylthiazole: step 1/1. Functionally, catalyzes the phosphorylation of the hydroxyl group of 4-methyl-5-beta-hydroxyethylthiazole (THZ). This Acinetobacter baylyi (strain ATCC 33305 / BD413 / ADP1) protein is Hydroxyethylthiazole kinase.